Consider the following 70-residue polypeptide: uncharacterized protein (70 aa).

This is an uncharacterized protein from Bacillus subtilis (strain 168).